A 102-amino-acid chain; its full sequence is Cytochrome c3 (102 aa).

Residues histidine 26, histidine 29, cysteine 34, cysteine 37, histidine 38, histidine 39, cysteine 50, cysteine 55, histidine 56, histidine 73, cysteine 81, cysteine 84, histidine 85, cysteine 95, cysteine 98, and histidine 99 each contribute to the heme c site.

Heme serves as cofactor.

The protein resides in the periplasm. In terms of biological role, participates in sulfate respiration coupled with phosphorylation by transferring electrons from the enzyme dehydrogenase to ferredoxin. The sequence is that of Cytochrome c3 from Desulfovibrio desulfuricans.